Reading from the N-terminus, the 149-residue chain is Calmodulin (149 aa).

An N-acetylalanine modification is found at Ala-2. 4 EF-hand domains span residues 8–43, 44–79, 81–116, and 117–149; these read EQIA…LGQN, PTEA…KMKD, DTEE…LGEK, and LTDE…MMAK. Residues Asp-21, Asp-23, Asp-25, Thr-27, Glu-32, Asp-57, Asp-59, Asn-61, Thr-63, Glu-68, Asp-94, Asp-96, Asn-98, and Glu-105 each coordinate Ca(2+). An N6,N6,N6-trimethyllysine modification is found at Lys-116. Asp-130, Asp-132, Asp-134, Gln-136, and Glu-141 together coordinate Ca(2+).

It belongs to the calmodulin family.

In terms of biological role, calmodulin mediates the control of a large number of enzymes, ion channels and other proteins by Ca(2+). Among the enzymes to be stimulated by the calmodulin-Ca(2+) complex are a number of protein kinases and phosphatases. This is Calmodulin from Karlodinium veneficum (Dinoflagellate).